Consider the following 123-residue polypeptide: Small ribosomal subunit protein uS12 (123 aa).

The residue at position 89 (Asp89) is a 3-methylthioaspartic acid.

The protein belongs to the universal ribosomal protein uS12 family. Part of the 30S ribosomal subunit. Contacts proteins S8 and S17. May interact with IF1 in the 30S initiation complex.

With S4 and S5 plays an important role in translational accuracy. Functionally, interacts with and stabilizes bases of the 16S rRNA that are involved in tRNA selection in the A site and with the mRNA backbone. Located at the interface of the 30S and 50S subunits, it traverses the body of the 30S subunit contacting proteins on the other side and probably holding the rRNA structure together. The combined cluster of proteins S8, S12 and S17 appears to hold together the shoulder and platform of the 30S subunit. This is Small ribosomal subunit protein uS12 from Trichlorobacter lovleyi (strain ATCC BAA-1151 / DSM 17278 / SZ) (Geobacter lovleyi).